The sequence spans 517 residues: Crotonobetaine/carnitine--CoA ligase (517 aa).

This sequence belongs to the ATP-dependent AMP-binding enzyme family.

The catalysed reaction is 4-(trimethylamino)butanoate + ATP + CoA = 4-(trimethylamino)butanoyl-CoA + AMP + diphosphate. It carries out the reaction crotonobetaine + ATP + CoA = crotonobetainyl-CoA + AMP + diphosphate. The enzyme catalyses (R)-carnitine + ATP + CoA = (R)-carnitinyl-CoA + AMP + diphosphate. Its pathway is amine and polyamine metabolism; carnitine metabolism. In terms of biological role, catalyzes the transfer of CoA to carnitine, generating the initial carnitinyl-CoA needed for the CaiB reaction cycle. Also has activity toward crotonobetaine and gamma-butyrobetaine. The protein is Crotonobetaine/carnitine--CoA ligase of Shigella flexneri.